Here is a 389-residue protein sequence, read N- to C-terminus: MLLALAQWLQGDASFLRLFTYLTFRAVMATITALGIGLVCGPWVIRKLTEMKVGQAVRKDGPQTHLVKSGTPTMGGVLILIGIAVATLLWGDLTNRFIWIVMLVTFGFGVIGWVDDYRKVVYKDPRGMSSREKYFWQSVIGLFAAVYLAFSVSEANNVRVFDLFMAWVRSGLSMGLPARADLMLPFLKSISYPLGVWGFIALTYFVIVGASNAVNLTDGLDGLVIMPVVLVGASLGVFAYVMGSAVYSKYLLFPHIPGAGELLIFCSAMGGAGLAFLWYNTHPAQVFMGDVGALALGGALGTVAVIVRQEIVLFIMGGIFVAETLSVMLQVTWFKYTKKRYGEGRRIFKMAPLHHHFELSGWKETQVVVRFWIITLMLCLFGLSTLKLR.

10 consecutive transmembrane segments (helical) span residues 25 to 45 (RAVMATITALGIGLVCGPWVI), 73 to 93 (TMGGVLILIGIAVATLLWGDL), 97 to 117 (FIWIVMLVTFGFGVIGWVDDY), 135 to 155 (FWQSVIGLFAAVYLAFSVSEA), 190 to 210 (ISYPLGVWGFIALTYFVIVGA), 222 to 242 (GLVIMPVVLVGASLGVFAYVM), 258 to 278 (GAGELLIFCSAMGGAGLAFLW), 286 to 306 (VFMGDVGALALGGALGTVAVI), 311 to 331 (IVLFIMGGIFVAETLSVMLQV), and 366 to 386 (QVVVRFWIITLMLCLFGLSTL).

It belongs to the glycosyltransferase 4 family. MraY subfamily. Requires Mg(2+) as cofactor.

Its subcellular location is the cell inner membrane. It carries out the reaction UDP-N-acetyl-alpha-D-muramoyl-L-alanyl-gamma-D-glutamyl-meso-2,6-diaminopimeloyl-D-alanyl-D-alanine + di-trans,octa-cis-undecaprenyl phosphate = di-trans,octa-cis-undecaprenyl diphospho-N-acetyl-alpha-D-muramoyl-L-alanyl-D-glutamyl-meso-2,6-diaminopimeloyl-D-alanyl-D-alanine + UMP. The protein operates within cell wall biogenesis; peptidoglycan biosynthesis. Functionally, catalyzes the initial step of the lipid cycle reactions in the biosynthesis of the cell wall peptidoglycan: transfers peptidoglycan precursor phospho-MurNAc-pentapeptide from UDP-MurNAc-pentapeptide onto the lipid carrier undecaprenyl phosphate, yielding undecaprenyl-pyrophosphoryl-MurNAc-pentapeptide, known as lipid I. In Burkholderia multivorans (strain ATCC 17616 / 249), this protein is Phospho-N-acetylmuramoyl-pentapeptide-transferase.